We begin with the raw amino-acid sequence, 100 residues long: Small ribosomal subunit protein uS14c (100 aa).

This sequence belongs to the universal ribosomal protein uS14 family. As to quaternary structure, part of the 30S ribosomal subunit.

The protein resides in the plastid. Its subcellular location is the chloroplast. Its function is as follows. Binds 16S rRNA, required for the assembly of 30S particles. The protein is Small ribosomal subunit protein uS14c of Cryptomeria japonica (Japanese cedar).